The chain runs to 445 residues: Flagellum-associated coiled-coil domain-containing protein 1 (445 aa).

Positions 26-47 (PQLPRKNSTGSSKLTPLVPAPK) are disordered. Positions 30–39 (RKNSTGSSKL) are enriched in polar residues. Coiled coils occupy residues 122–226 (SRTN…TYQD) and 283–315 (AVFENFIQEKEELLKQHQSDTLQLEELRKTKEV). An N6-acetyllysine modification is found at Lys-376. A coiled-coil region spans residues 387-414 (EKYKHTIQILTEENIHLKQKIISKNEEI).

The protein localises to the cytoplasm. Its subcellular location is the cytoplasmic granule. It is found in the cell projection. The protein resides in the cilium. It localises to the flagellum. This chain is Flagellum-associated coiled-coil domain-containing protein 1, found in Homo sapiens (Human).